Here is a 184-residue protein sequence, read N- to C-terminus: Photosystem I assembly protein Ycf4 (184 aa).

Helical transmembrane passes span 22–42 (FCWA…GTSS) and 57–77 (IIFF…LFIS).

Belongs to the Ycf4 family.

It localises to the plastid. It is found in the chloroplast thylakoid membrane. Seems to be required for the assembly of the photosystem I complex. This Capsella bursa-pastoris (Shepherd's purse) protein is Photosystem I assembly protein Ycf4.